Reading from the N-terminus, the 362-residue chain is tRNA N6-adenosine threonylcarbamoyltransferase (362 aa).

The Fe cation site is built by His-120 and His-124. Residues 142 to 146 (LASGG), Asp-175, Gly-188, and Asn-288 contribute to the substrate site. A Fe cation-binding site is contributed by Asp-316. Over residues 342–351 (RPRWPLDPDA) the composition is skewed to basic and acidic residues. The segment at 342–362 (RPRWPLDPDAPKAAGAGGVKA) is disordered.

Belongs to the KAE1 / TsaD family. It depends on Fe(2+) as a cofactor.

Its subcellular location is the cytoplasm. It carries out the reaction L-threonylcarbamoyladenylate + adenosine(37) in tRNA = N(6)-L-threonylcarbamoyladenosine(37) in tRNA + AMP + H(+). Its function is as follows. Required for the formation of a threonylcarbamoyl group on adenosine at position 37 (t(6)A37) in tRNAs that read codons beginning with adenine. Is involved in the transfer of the threonylcarbamoyl moiety of threonylcarbamoyl-AMP (TC-AMP) to the N6 group of A37, together with TsaE and TsaB. TsaD likely plays a direct catalytic role in this reaction. This is tRNA N6-adenosine threonylcarbamoyltransferase from Rhodospirillum rubrum (strain ATCC 11170 / ATH 1.1.1 / DSM 467 / LMG 4362 / NCIMB 8255 / S1).